We begin with the raw amino-acid sequence, 334 residues long: GTP 3',8-cyclase (334 aa).

The region spanning 13–239 (RFQRKFYYLR…KARADNDGPA (227 aa)) is the Radical SAM core domain. GTP is bound at residue Arg-22. [4Fe-4S] cluster contacts are provided by Cys-29 and Cys-33. Residue Tyr-35 coordinates S-adenosyl-L-methionine. Cys-36 is a binding site for [4Fe-4S] cluster. Arg-73 lines the GTP pocket. Gly-77 is an S-adenosyl-L-methionine binding site. Thr-104 is a binding site for GTP. Ser-128 contributes to the S-adenosyl-L-methionine binding site. Lys-165 serves as a coordination point for GTP. Met-199 lines the S-adenosyl-L-methionine pocket. Residues Cys-262 and Cys-265 each coordinate [4Fe-4S] cluster. 267 to 269 (RLR) lines the GTP pocket. [4Fe-4S] cluster is bound at residue Cys-279.

This sequence belongs to the radical SAM superfamily. MoaA family. In terms of assembly, monomer and homodimer. [4Fe-4S] cluster serves as cofactor.

The enzyme catalyses GTP + AH2 + S-adenosyl-L-methionine = (8S)-3',8-cyclo-7,8-dihydroguanosine 5'-triphosphate + 5'-deoxyadenosine + L-methionine + A + H(+). It participates in cofactor biosynthesis; molybdopterin biosynthesis. In terms of biological role, catalyzes the cyclization of GTP to (8S)-3',8-cyclo-7,8-dihydroguanosine 5'-triphosphate. This Vibrio cholerae serotype O1 (strain M66-2) protein is GTP 3',8-cyclase.